The following is a 193-amino-acid chain: Cerebellin-1 (193 aa).

The first 21 residues, 1–21 (MLGVLELLLLGAAWLAGPARG), serve as a signal peptide directing secretion. The N-linked (GlcNAc...) asparagine glycan is linked to N23. An essential for interaction with NRXN1 and linker of two C1q trimers into disulfide-linked hexamers region spans residues 34-38 (CLVVC). The C1q domain maps to 57-193 (SGSAKVAFSA…TFSGFLVFPL (137 aa)). Positions 62 to 193 (VAFSAIRSTN…TFSGFLVFPL (132 aa)) are necessary for interaction with CBLN3, and homotrimerization. N79 is a glycosylation site (N-linked (GlcNAc...) asparagine). Residues 122-147 (YNRQTIQVSLMLNGWPVISAFAGDQD) are essential for interaction with GRID2.

Homohexamer; disulfide-linked homotrimers. The trimers associate via N-terminal cysteine residues to form disulfide-linked hexamers. May form oligomers with CBLN2, CBLN3 AND CBLN4 prior to secretion. Once secreted, does not interact with other CBLN family members. Interacts with GRID1. Interacts with NRXN1 and NRXN2 long (alpha) and short (beta) isoforms produced by alternative promoter usage. Competes with NLGN1 for NRXN1-binding. Weakly interacts with NRXN3 short isoform and not at all with NRXN3 long isoform. Interacts (via C1q domain) with GRID2; GRID2-binding is calcium-independent; CBLN1 hexamers anchor GRID2 N-terminal domain dimers to monomeric NRXN1 isoform beta; promotes synaptogenesis and mediates the D-Serine-dependent long term depression signals and AMPA receptor endocytosis. Interacts with OTOL1. The proteolytic processing to yield cerebellin seems to occur either prior to the secretion by presynaptic neurons and subsequent oligomerization or in some other location after release of the mature protein. In terms of processing, sialoglycoprotein. As to expression, in the Purkinje cells postsynaptic structures. In the cerebellum, cerebellin is much less abundant than [des-Ser1]-cerebellin.

The protein localises to the secreted. It is found in the postsynaptic cell membrane. In terms of biological role, required for synapse integrity and synaptic plasticity. During cerebellar synapse formation, essential for the matching and maintenance of pre- and post-synaptic elements at parallel fiber-Purkinje cell synapses, the establishment of the proper pattern of climbing fiber-Purkinje cell innervation, and induction of long-term depression at parallel fiber-Purkinje cell synapses. Plays a role as a synaptic organizer that acts bidirectionally on both pre- and post-synaptic components. On the one hand induces accumulation of synaptic vesicles in the pre-synaptic part by binding with NRXN1 and in other hand induces clustering of GRID2 and its associated proteins at the post-synaptic site through association of GRID2. NRXN1-CBLN1-GRID2 complex directly induces parallel fiber protrusions that encapsulate spines of Purkinje cells leading to accumulation of GRID2 and synaptic vesicles. Required for CBLN3 export from the endoplasmic reticulum and secretion. NRXN1-CBLN1-GRID2 complex mediates the D-Serine-dependent long term depression signals and AMPA receptor endocytosis. Essential for long-term maintenance but not establishment of excitatory synapses. Inhibits the formation and function of inhibitory GABAergic synapses in cerebellar Purkinje cells. Functionally, the cerebellin peptide exerts neuromodulatory functions. Directly stimulates norepinephrine release via the adenylate cyclase/PKA-dependent signaling pathway; and indirectly enhances adrenocortical secretion in vivo, through a paracrine mechanism involving medullary catecholamine release. The protein is Cerebellin-1 (CBLN1) of Homo sapiens (Human).